The sequence spans 590 residues: MEVIHGRPYCCRELEGADILSNTFYSNELHNPLQTVTRPTASEDRYQELRESLQQCRLPWGAEREYGGIIPISLPEDHRPKYEPPRVMGKGHQHYGFGGETWPRKLPVEQFYYLTQNKKSDVYGNDSLIPKPPNSTVGEICLPYPIEHPYHTHICRGAMFPTFTSPEDLYTGIKARTQQPFPPTVPTKAYDSTVLKTRGNPYRYELIDIPMDSKKKALTWPGQGVYYDFPRGVEKNKPVFYPKPPKTFAPNTSLNSWDPICSAKEANIQRNLERSHWLTSYTHDFTGLGPMDPLELDDYHEKMVAELTRKIGFDPEPQEKFHPVFKPPRPLEGRIARLIQNRRSLEAIVQQRPRSCPDCTPRVLCNFHTFVPSSKEMVALSDNIPAGVTHKNQDIEEKIIEEQSLLSTYELPSCYPTKDLTSIYDIKPFPKITDTKKTEDLYWRQQSLKTQPTPYCKPDHWIHYENLKSPLRDQYNMCPDPVSLSKPSVLQNKQDTEAFTLEHFLSKPEEELFLNMENNEETRPVLGWIPRAGVTKPQTNLLELKNSFSKTGAQKRFHKSILEDHKDLRDNEHSGMKHQFYGHNSYYFYN.

Threonine 219 carries the post-translational modification Phosphothreonine. Residues serine 407 and serine 422 each carry the phosphoserine modification. Lysine 427 is covalently cross-linked (Glycyl lysine isopeptide (Lys-Gly) (interchain with G-Cter in SUMO2)). Position 442 is a phosphotyrosine (tyrosine 442). Serine 485 bears the Phosphoserine mark. A Glycyl lysine isopeptide (Lys-Gly) (interchain with G-Cter in SUMO2) cross-link involves residue lysine 545. A Phosphoserine modification is found at serine 547.

In terms of tissue distribution, predominantly expressed in the testes.

Its subcellular location is the cytoplasm. The protein localises to the cytoskeleton. It is found in the microtubule organizing center. The protein resides in the centrosome. It localises to the flagellum axoneme. Microtubule inner protein (MIP) part of the dynein-decorated doublet microtubules (DMTs) in flagellum axoneme. May serve to reinforce and thus stabilize the microtubule structure in the sperm flagella. The sequence is that of Sperm-associated microtubule inner protein 4 from Homo sapiens (Human).